The sequence spans 101 residues: Small ubiquitin-related modifier 1 (101 aa).

The Ubiquitin-like domain maps to 20–97 (EYIKLKVIGQ…IEVYQEQTGG (78 aa)). Residue Gly97 forms a Glycyl lysine isopeptide (Gly-Lys) (interchain with K-? in acceptor proteins) linkage. The propeptide occupies 98–101 (HSTV).

The protein belongs to the ubiquitin family. SUMO subfamily. As to quaternary structure, interacts with SAE2, UBE2I, RANBP2, PIAS1 and PIAS2. Covalently attached to a number of proteins. Post-translationally, cleavage of precursor form by a sentrin-specific protease is necessary for function.

Its subcellular location is the nucleus membrane. It localises to the nucleus speckle. The protein localises to the cytoplasm. The protein resides in the nucleus. It is found in the PML body. Its subcellular location is the cell membrane. Its function is as follows. Ubiquitin-like protein that can be covalently attached to proteins as a monomer or a lysine-linked polymer. Covalent attachment via an isopeptide bond to its substrates requires prior activation by the E1 complex SAE1-SAE2 and linkage to the E2 enzyme UBE2I. This post-translational modification on lysine residues of proteins plays a crucial role in a number of cellular processes such as nuclear transport, DNA replication and repair, mitosis and signal transduction. Polymeric SUMO1 chains are also susceptible to polyubiquitination which functions as a signal for proteasomal degradation of modified proteins. This chain is Small ubiquitin-related modifier 1 (SUMO1), found in Gallus gallus (Chicken).